The following is a 251-amino-acid chain: Protein unc-119 homolog B (251 aa).

Positions 1–13 (MSGSNPKAATAGS) are enriched in polar residues. Positions 1–56 (MSGSNPKAATAGSQAGPGGLVAGKEEKKKAGGGVLNRLKARRQGPPHTPDDGSGAA) are disordered. Ser-2 is modified (N-acetylserine). Residue Lys-24 is modified to N6-acetyllysine. Residue Tyr-142 coordinates tetradecanoate.

The protein belongs to the PDE6D/unc-119 family. As to quaternary structure, found in a complex with ARL3, RP2 and UNC119B; RP2 induces hydrolysis of GTP ARL3 in the complex, leading to the release of UNC119B. Interacts with NPHP3 (when myristoylated). Interacts with CYS1 (when myristoylated). Interacts with MACIR; interaction only takes place when UNC119B is not liganded with myristoylated proteins.

It is found in the cell projection. The protein localises to the cilium. Its function is as follows. Myristoyl-binding protein that acts as a cargo adapter: specifically binds the myristoyl moiety of a subset of N-terminally myristoylated proteins and is required for their localization. Binds myristoylated NPHP3 and plays a key role in localization of NPHP3 to the primary cilium membrane. Does not bind all myristoylated proteins. Probably plays a role in trafficking proteins in photoreceptor cells. The polypeptide is Protein unc-119 homolog B (Unc119b) (Mus musculus (Mouse)).